The primary structure comprises 165 residues: REP-associated tyrosine transposase (165 aa).

The protein belongs to the transposase 17 family. RAYT subfamily. Monomer.

With respect to regulation, cleavage occurs in the presence of magnesium, but is much more pronounced with manganese. Transposase that is always flanked by repeated extragenic palindrome (REP) sequences, which are clustered in structures called bacterial interspersed mosaic elements (BIMEs). RayT catalyzes cleavage and recombination of BIMEs. Binds REP sequences and cleaves BIMEs both upstream and downstream of the REP sequence. Could be important in the creation of BIME variability and amplification. The chain is REP-associated tyrosine transposase from Escherichia coli (strain K12).